The primary structure comprises 146 residues: Phospho-2-dehydro-3-deoxyheptonate aldolase (146 aa).

It belongs to the class-II DAHP synthase family. Homodimer.

The enzyme catalyses D-erythrose 4-phosphate + phosphoenolpyruvate + H2O = 7-phospho-2-dehydro-3-deoxy-D-arabino-heptonate + phosphate. The protein operates within metabolic intermediate biosynthesis; chorismate biosynthesis; chorismate from D-erythrose 4-phosphate and phosphoenolpyruvate: step 1/7. This chain is Phospho-2-dehydro-3-deoxyheptonate aldolase, found in Streptomyces lividans.